Here is a 674-residue protein sequence, read N- to C-terminus: Cysteine-rich receptor-like protein kinase 6 (674 aa).

Residues 1 to 24 (MSSLISFNFLFLFSFLTSSFTASA) form the signal peptide. Topologically, residues 25 to 289 (QDPFYLNHYC…LPGKSGNSTV (265 aa)) are extracellular. 2 Gnk2-homologous domains span residues 28–132 (FYLN…HKNI) and 139–245 (NEGE…LYPF). N-linked (GlcNAc...) asparagine glycans are attached at residues Asn36, Asn43, Asn61, Asn70, Asn104, Asn178, and Asn247. A compositionally biased stretch (pro residues) spans 254 to 266 (PPLPPPPPPPPPR). Residues 254–284 (PPLPPPPPPPPPRESLVSTPPISSSSLPGKS) form a disordered region. Low complexity predominate over residues 268-284 (SLVSTPPISSSSLPGKS). The N-linked (GlcNAc...) asparagine glycan is linked to Asn286. Residues 290–310 (LVVAVVVLAVLLFIALVGYCF) traverse the membrane as a helical segment. Residues 311–674 (LAKKKKKTFD…DESITDLYPR (364 aa)) are Cytoplasmic-facing. Residues 351–637 (FAESNKIGRG…TLPVPRQPGF (287 aa)) enclose the Protein kinase domain. ATP contacts are provided by residues 357–365 (IGRGGFGEV) and Lys379. Tyr424 is subject to Phosphotyrosine. Asp476 serves as the catalytic Proton acceptor. Residue Ser480 is modified to Phosphoserine. Phosphothreonine is present on Thr516. Tyr524 carries the phosphotyrosine modification. The tract at residues 648-674 (LDSDQSTTTKSFPASIDDESITDLYPR) is disordered. Positions 650-659 (SDQSTTTKSF) are enriched in polar residues.

This sequence belongs to the protein kinase superfamily. Ser/Thr protein kinase family. CRK subfamily.

It is found in the membrane. It catalyses the reaction L-seryl-[protein] + ATP = O-phospho-L-seryl-[protein] + ADP + H(+). The enzyme catalyses L-threonyl-[protein] + ATP = O-phospho-L-threonyl-[protein] + ADP + H(+). The polypeptide is Cysteine-rich receptor-like protein kinase 6 (CRK6) (Arabidopsis thaliana (Mouse-ear cress)).